A 318-amino-acid polypeptide reads, in one-letter code: NADH-ubiquinone oxidoreductase chain 1 (318 aa).

The next 8 helical transmembrane spans lie at 3 to 23, 70 to 90, 100 to 120, 146 to 166, 171 to 191, 222 to 242, 253 to 273, and 294 to 314; these read MVNLLTMIVPILLAVAFLTLI, MFIIAPILALTLALTMWIPLP, LAVLFMLAMSSLAVYSILWSG, LAIILLSVLLLSGSFSLSTLI, HTWLMLSSWPLAMMWFISTLA, LFFMAEYANIIMMNTLTAILF, ELYTINLIIKALLLTVFFLWI, and LPLTLALCMWHVAMPITMAGI.

This sequence belongs to the complex I subunit 1 family.

Its subcellular location is the mitochondrion inner membrane. The enzyme catalyses a ubiquinone + NADH + 5 H(+)(in) = a ubiquinol + NAD(+) + 4 H(+)(out). Core subunit of the mitochondrial membrane respiratory chain NADH dehydrogenase (Complex I) that is believed to belong to the minimal assembly required for catalysis. Complex I functions in the transfer of electrons from NADH to the respiratory chain. The immediate electron acceptor for the enzyme is believed to be ubiquinone. The protein is NADH-ubiquinone oxidoreductase chain 1 (MT-ND1) of Pteropus vampyrus (Large flying fox).